The sequence spans 58 residues: DNA-binding protein (58 aa).

Composition is skewed to basic residues over residues Met1–Ser19 and Ser28–Ile58. The tract at residues Met1–Ile58 is disordered.

Post-translationally, probably phosphorylated in infected cells.

Its subcellular location is the virion. Functionally, thought to be responsible for DNA condensation during packaging of the nucleocapsids. The sequence is that of DNA-binding protein (P7.3) from Cryptophlebia leucotreta granulosis virus (ClGV).